Here is an 84-residue protein sequence, read N- to C-terminus: Toxin To5 (84 aa).

The N-terminal stretch at 1–19 (MKAIIFFIGCLMLIDLVAG) is a signal peptide. Positions 21–82 (RSGYPVTQKG…IWGSYPNNCG (62 aa)) constitute an LCN-type CS-alpha/beta domain. Cystine bridges form between cysteine 31-cysteine 81, cysteine 35-cysteine 57, cysteine 43-cysteine 62, and cysteine 47-cysteine 64. Position 81 is a cysteine amide (cysteine 81).

As to expression, expressed by the venom gland.

It is found in the secreted. Functionally, beta toxins bind voltage-independently at site-4 of sodium channels (Nav) and shift the voltage of activation toward more negative potentials thereby affecting sodium channel activation and promoting spontaneous and repetitive firing. The sequence is that of Toxin To5 from Tityus obscurus (Amazonian scorpion).